Reading from the N-terminus, the 165-residue chain is Methylated-DNA--protein-cysteine methyltransferase (165 aa).

Catalysis depends on Cys126, which acts as the Nucleophile; methyl group acceptor.

This sequence belongs to the MGMT family.

The protein localises to the cytoplasm. It catalyses the reaction a 6-O-methyl-2'-deoxyguanosine in DNA + L-cysteinyl-[protein] = S-methyl-L-cysteinyl-[protein] + a 2'-deoxyguanosine in DNA. The enzyme catalyses a 4-O-methyl-thymidine in DNA + L-cysteinyl-[protein] = a thymidine in DNA + S-methyl-L-cysteinyl-[protein]. Its function is as follows. Involved in the cellular defense against the biological effects of O6-methylguanine (O6-MeG) and O4-methylthymine (O4-MeT) in DNA. Repairs the methylated nucleobase in DNA by stoichiometrically transferring the methyl group to a cysteine residue in the enzyme. This is a suicide reaction: the enzyme is irreversibly inactivated. The polypeptide is Methylated-DNA--protein-cysteine methyltransferase (Mycolicibacterium paratuberculosis (strain ATCC BAA-968 / K-10) (Mycobacterium paratuberculosis)).